The primary structure comprises 241 residues: DNA repair protein RecO (241 aa).

The protein belongs to the RecO family.

Involved in DNA repair and RecF pathway recombination. In Rickettsia canadensis (strain McKiel), this protein is DNA repair protein RecO.